The following is a 269-amino-acid chain: Cytochrome c oxidase subunit 3 (269 aa).

Transmembrane regions (helical) follow at residues 21-41, 49-69, 90-110, 132-152, 167-187, 205-225, and 247-267; these read PWPM…GLTA, MFML…FKDI, GFLM…WAFL, ISAA…GVTM, TLYG…FQGL, FFAL…MLAM, and ILYL…VYWW.

Belongs to the cytochrome c oxidase subunit 3 family. As to quaternary structure, component of the cytochrome c oxidase (complex IV, CIV), a multisubunit enzyme composed of a catalytic core of 3 subunits and several supernumerary subunits. The complex exists as a monomer or a dimer and forms supercomplexes (SCs) in the inner mitochondrial membrane with ubiquinol-cytochrome c oxidoreductase (cytochrome b-c1 complex, complex III, CIII).

It is found in the mitochondrion inner membrane. The catalysed reaction is 4 Fe(II)-[cytochrome c] + O2 + 8 H(+)(in) = 4 Fe(III)-[cytochrome c] + 2 H2O + 4 H(+)(out). Functionally, component of the cytochrome c oxidase, the last enzyme in the mitochondrial electron transport chain which drives oxidative phosphorylation. The respiratory chain contains 3 multisubunit complexes succinate dehydrogenase (complex II, CII), ubiquinol-cytochrome c oxidoreductase (cytochrome b-c1 complex, complex III, CIII) and cytochrome c oxidase (complex IV, CIV), that cooperate to transfer electrons derived from NADH and succinate to molecular oxygen, creating an electrochemical gradient over the inner membrane that drives transmembrane transport and the ATP synthase. Cytochrome c oxidase is the component of the respiratory chain that catalyzes the reduction of oxygen to water. Electrons originating from reduced cytochrome c in the intermembrane space (IMS) are transferred via the dinuclear copper A center (CU(A)) of subunit 2 and heme A of subunit 1 to the active site in subunit 1, a binuclear center (BNC) formed by heme A3 and copper B (CU(B)). The BNC reduces molecular oxygen to 2 water molecules using 4 electrons from cytochrome c in the IMS and 4 protons from the mitochondrial matrix. The polypeptide is Cytochrome c oxidase subunit 3 (COX3) (Debaryomyces hansenii (strain ATCC 36239 / CBS 767 / BCRC 21394 / JCM 1990 / NBRC 0083 / IGC 2968) (Yeast)).